The following is a 672-amino-acid chain: Acetoacetyl-CoA synthetase (672 aa).

Belongs to the ATP-dependent AMP-binding enzyme family.

Its subcellular location is the cytoplasm. It localises to the cytosol. It carries out the reaction acetoacetate + ATP + CoA = acetoacetyl-CoA + AMP + diphosphate. Its function is as follows. Converts acetoacetate to acetoacetyl-CoA in the cytosol. Ketone body-utilizing enzyme, responsible for the synthesis of cholesterol and fatty acids. In Macaca fascicularis (Crab-eating macaque), this protein is Acetoacetyl-CoA synthetase (AACS).